The chain runs to 508 residues: Photosystem II CP47 reaction center protein (508 aa).

The next 6 helical transmembrane spans lie at 21–36 (SVHI…WAGS), 101–115 (IVFS…IWHW), 140–156 (GIHL…FGVF), 203–218 (IAAG…FHLS), 237–252 (VLSS…AFVV), and 457–472 (SFAL…HGAR).

The protein belongs to the PsbB/PsbC family. PsbB subfamily. As to quaternary structure, PSII is composed of 1 copy each of membrane proteins PsbA, PsbB, PsbC, PsbD, PsbE, PsbF, PsbH, PsbI, PsbJ, PsbK, PsbL, PsbM, PsbT, PsbX, PsbY, PsbZ, Psb30/Ycf12, at least 3 peripheral proteins of the oxygen-evolving complex and a large number of cofactors. It forms dimeric complexes. Binds multiple chlorophylls. PSII binds additional chlorophylls, carotenoids and specific lipids. serves as cofactor.

Its subcellular location is the plastid. It localises to the chloroplast thylakoid membrane. Its function is as follows. One of the components of the core complex of photosystem II (PSII). It binds chlorophyll and helps catalyze the primary light-induced photochemical processes of PSII. PSII is a light-driven water:plastoquinone oxidoreductase, using light energy to abstract electrons from H(2)O, generating O(2) and a proton gradient subsequently used for ATP formation. This Jasminum nudiflorum (Winter jasmine) protein is Photosystem II CP47 reaction center protein.